A 177-amino-acid chain; its full sequence is ATP-dependent protease subunit HslV (177 aa).

T6 is a catalytic residue. Residues A162, C165, and T168 each contribute to the Na(+) site.

Belongs to the peptidase T1B family. HslV subfamily. In terms of assembly, a double ring-shaped homohexamer of HslV is capped on each side by a ring-shaped HslU homohexamer. The assembly of the HslU/HslV complex is dependent on binding of ATP.

It is found in the cytoplasm. It catalyses the reaction ATP-dependent cleavage of peptide bonds with broad specificity.. Allosterically activated by HslU binding. Its function is as follows. Protease subunit of a proteasome-like degradation complex believed to be a general protein degrading machinery. This chain is ATP-dependent protease subunit HslV, found in Lawsonia intracellularis (strain PHE/MN1-00).